Consider the following 728-residue polypeptide: Ribosome biogenesis protein bop1-B (728 aa).

The tract at residues 1–114 (MKRGSKRESG…ENDSSDEEDI (114 aa)) is disordered. Acidic residues predominate over residues 50–67 (SGTDSSDDEEDHSSEEVQ). 7 WD repeats span residues 393–432 (GHKDLVRCISVSPSGQWLVSGSDDCSVRFWEVSTGRCMKS), 434–474 (VLEG…RLLC), 514–556 (KHQK…SQNP), 559–597 (KNKGQVQKVLFHPTRPFFFVATQRYVRVYNLLKQELTKK), 600–639 (TNCKWVSSIAVHPAGDNLICGSYDSKLAWFDMDLSTKPYK), 643–682 (HHKKALRAVSFHKSYPLFASGSDDASVIVCHGMVYNDLLQ), and 698–728 (HRDLGVLDVMFHPTQPWVFSSGADGTIRLFT).

This sequence belongs to the WD repeat BOP1/ERB1 family. In terms of assembly, component of the PeBoW complex, composed of bop1, pes1 and wdr12. The complex is held together by bop1, which interacts with pes1 via its N-terminal domain and with wdr12 via a high-affinity interaction between the seven-bladed beta-propeller domains of the 2 proteins. The PeBoW complex associates with the 66S pre-ribosome.

The protein resides in the nucleus. It is found in the nucleolus. It localises to the nucleoplasm. Functionally, component of the PeBoW complex, which is required for maturation of 28S and 5.8S ribosomal RNAs and formation of the 60S ribosome. This is Ribosome biogenesis protein bop1-B (bop1-b) from Xenopus laevis (African clawed frog).